A 278-amino-acid polypeptide reads, in one-letter code: Short-chain dehydrogenase RED2 (278 aa).

Residues I15, D70, R132, Y178, K182, V211, and T213 each coordinate NADP(+). The Proton donor role is filled by Y178. Residue K182 is the Lowers pKa of active site Tyr of the active site.

This sequence belongs to the short-chain dehydrogenases/reductases (SDR) family.

Its pathway is polyketide biosynthesis. Its function is as follows. Short-chain dehydrogenase; part of the gene cluster that mediates the biosynthesis of pyriculol and pyriculariol, two heptaketides that induce lesion formation upon application on rice leaves but are dispensable for pathogenicity. The highly reducing polyketide synthase synthesizes the heptaketide backbone of pyriculol and pyriculariol. Pyriculol and pyriculariol contain several hydroxyl moieties and double bonds, so it can be assumed that several reduction steps occur during biosynthesis. These reactions could be executed by PKS19 itself or partly by the tailoring enzymes OXR1, OXR2, RED1, RED2 or RED3, identified within the cluster. The FAD-linked oxidoreductase OXR1 is the only tailoring enzyme for which the function has been determined yet, and is involved in the oxidation of dihydropyriculol and dihydropyriculariol into pyriculol and pyriculariol, respectively. The polypeptide is Short-chain dehydrogenase RED2 (Pyricularia oryzae (strain 70-15 / ATCC MYA-4617 / FGSC 8958) (Rice blast fungus)).